Consider the following 241-residue polypeptide: Uridylate kinase (241 aa).

11-14 serves as a coordination point for ATP; sequence KFSG. The tract at residues 19–24 is involved in allosteric activation by GTP; the sequence is GENGFG. A UMP-binding site is contributed by glycine 53. Positions 54 and 58 each coordinate ATP. Residues aspartate 74 and 135-142 contribute to the UMP site; that span reads TGNPFFTT. ATP-binding residues include threonine 162, tyrosine 168, and aspartate 171.

This sequence belongs to the UMP kinase family. In terms of assembly, homohexamer.

It localises to the cytoplasm. The catalysed reaction is UMP + ATP = UDP + ADP. Its pathway is pyrimidine metabolism; CTP biosynthesis via de novo pathway; UDP from UMP (UMPK route): step 1/1. Allosterically activated by GTP. Inhibited by UTP. Catalyzes the reversible phosphorylation of UMP to UDP. This is Uridylate kinase from Wolinella succinogenes (strain ATCC 29543 / DSM 1740 / CCUG 13145 / JCM 31913 / LMG 7466 / NCTC 11488 / FDC 602W) (Vibrio succinogenes).